The chain runs to 424 residues: Adenylosuccinate synthetase (424 aa).

Residues 12–18 (GDEGKGK) and 40–42 (GHT) each bind GTP. Aspartate 13 (proton acceptor) is an active-site residue. Mg(2+) is bound by residues aspartate 13 and glycine 40. IMP contacts are provided by residues 13–16 (DEGK), 38–41 (NAGH), threonine 130, arginine 144, asparagine 220, threonine 235, and arginine 299. Histidine 41 serves as the catalytic Proton donor. Position 295 to 301 (295 to 301 (VTTGRRR)) interacts with substrate. GTP is bound by residues arginine 301, 327-329 (KLD), and 412-414 (GTG).

It belongs to the adenylosuccinate synthetase family. As to quaternary structure, homodimer. The cofactor is Mg(2+).

It is found in the cytoplasm. It carries out the reaction IMP + L-aspartate + GTP = N(6)-(1,2-dicarboxyethyl)-AMP + GDP + phosphate + 2 H(+). It functions in the pathway purine metabolism; AMP biosynthesis via de novo pathway; AMP from IMP: step 1/2. In terms of biological role, plays an important role in the de novo pathway and in the salvage pathway of purine nucleotide biosynthesis. Catalyzes the first committed step in the biosynthesis of AMP from IMP. In Aspergillus flavus (strain ATCC 200026 / FGSC A1120 / IAM 13836 / NRRL 3357 / JCM 12722 / SRRC 167), this protein is Adenylosuccinate synthetase.